Here is a 92-residue protein sequence, read N- to C-terminus: Small ribosomal subunit protein uS19 (92 aa).

This sequence belongs to the universal ribosomal protein uS19 family.

Its function is as follows. Protein S19 forms a complex with S13 that binds strongly to the 16S ribosomal RNA. This chain is Small ribosomal subunit protein uS19, found in Borrelia hermsii (strain HS1 / DAH).